A 518-amino-acid polypeptide reads, in one-letter code: Cell wall biosynthesis protein LcpA (518 aa).

Over 1–31 (MTEKYRPVRDIKPAPAAMQSTKQAGHPVFRS) the chain is Cytoplasmic. The helical transmembrane segment at 32-52 (VVAFVSVLVLLVSGLGYLAVG) threads the bilayer. Residues 53-518 (KVDGVASGNL…AGGDGPRCVN (466 aa)) lie on the Periplasmic side of the membrane. The disordered stretch occupies residues 485–518 (AVTSSTVGQPGADVGEPIESPEFDAGGDGPRCVN).

The protein belongs to the LytR/CpsA/Psr (LCP) family. In terms of assembly, forms homodimers and homotetramers.

The protein localises to the cell inner membrane. Its function is as follows. Involved in cell wall biosynthesis. May be responsible for the transfer of arabinogalactan onto peptidoglycan. In vitro, has pyrophosphatase activity. This chain is Cell wall biosynthesis protein LcpA, found in Corynebacterium glutamicum (strain ATCC 13032 / DSM 20300 / JCM 1318 / BCRC 11384 / CCUG 27702 / LMG 3730 / NBRC 12168 / NCIMB 10025 / NRRL B-2784 / 534).